Consider the following 152-residue polypeptide: 3-dehydroquinate dehydratase (152 aa).

Residue Tyr26 is the Proton acceptor of the active site. The substrate site is built by Asn78, His84, and Asp91. Residue His104 is the Proton donor of the active site. Substrate-binding positions include 105 to 106 (LS) and Arg115.

Belongs to the type-II 3-dehydroquinase family. Homododecamer.

It carries out the reaction 3-dehydroquinate = 3-dehydroshikimate + H2O. The protein operates within metabolic intermediate biosynthesis; chorismate biosynthesis; chorismate from D-erythrose 4-phosphate and phosphoenolpyruvate: step 3/7. Functionally, catalyzes a trans-dehydration via an enolate intermediate. The chain is 3-dehydroquinate dehydratase from Idiomarina loihiensis (strain ATCC BAA-735 / DSM 15497 / L2-TR).